The sequence spans 305 residues: Glycine--tRNA ligase alpha subunit (305 aa).

This sequence belongs to the class-II aminoacyl-tRNA synthetase family. In terms of assembly, tetramer of two alpha and two beta subunits.

The protein localises to the cytoplasm. It carries out the reaction tRNA(Gly) + glycine + ATP = glycyl-tRNA(Gly) + AMP + diphosphate. The chain is Glycine--tRNA ligase alpha subunit from Ligilactobacillus salivarius (strain UCC118) (Lactobacillus salivarius).